A 138-amino-acid polypeptide reads, in one-letter code: Protein SPMIP3 (138 aa).

This Bos taurus (Bovine) protein is Protein SPMIP3 (SPMIP3).